A 200-amino-acid chain; its full sequence is Anthranilate synthase component 2, pyocyanine specific (200 aa).

The region spanning 2-195 is the Glutamine amidotransferase type-1 domain; sequence RITLLDNFDS…LLWCGALAVR (194 aa). Position 56–58 (56–58) interacts with L-glutamine; sequence GPG. Cysteine 83 (nucleophile; for GATase activity) is an active-site residue. L-glutamine contacts are provided by residues glutamine 87 and 133–134; that span reads SL. Catalysis depends on for GATase activity residues histidine 169 and glutamate 171.

As to quaternary structure, heterotetramer consisting of two non-identical subunits: a beta subunit (PhnB) and a large alpha subunit (PhnA).

The catalysed reaction is chorismate + L-glutamine = anthranilate + pyruvate + L-glutamate + H(+). It participates in secondary metabolite biosynthesis; pyocyanine biosynthesis. Part of a heterotetrameric complex that catalyzes the two-step biosynthesis of anthranilate, a precursor for Pseudomonas quinolone signal (2-heptyl-3-hydroxy-4-quinolone; PQS) production which is required to induce the genes for the biosynthesis of the virulence factor pyocyanine (PCN), a characteristic blue-green phenazine pigment produced by P.aeruginosa. In the first step, the glutamine-binding beta subunit (PhnB) of anthranilate synthase (AS) provides the glutamine amidotransferase activity which generates ammonia as a substrate that, along with chorismate, is used in the second step, catalyzed by the large alpha subunit of AS (PhnA) to produce anthranilate. The chain is Anthranilate synthase component 2, pyocyanine specific from Pseudomonas aeruginosa (strain ATCC 15692 / DSM 22644 / CIP 104116 / JCM 14847 / LMG 12228 / 1C / PRS 101 / PAO1).